The following is a 590-amino-acid chain: Muscarinic acetylcholine receptor M3 (590 aa).

The Extracellular segment spans residues 1 to 67 (MTLHNNNTTS…DPLGGHTIWQ (67 aa)). Residues N6, N7, N15, N41, N48, and N53 are each glycosylated (N-linked (GlcNAc...) asparagine). A helical membrane pass occupies residues 68–91 (VVFIAFLTGVLALVTIIGNILVIV). The Cytoplasmic portion of the chain corresponds to 92 to 104 (AFKVNKQLKTVNN). The helical transmembrane segment at 105–125 (YFLLSLACADLIIGVISMNLF) threads the bilayer. The Extracellular segment spans residues 126–142 (TTYIIMNRWALGNLACD). C141 and C221 are disulfide-bonded. Residues 143–164 (LWLSIDYVASNASVMNLLVISF) traverse the membrane as a helical segment. Topologically, residues 165-184 (DRYFSITRPLTYRAKRTTKR) are cytoplasmic. The chain crosses the membrane as a helical span at residues 185–207 (AGVMIGLAWVISFILWAPAILFW). The Extracellular portion of the chain corresponds to 208–229 (QYFVGKRTVPPGECFIQFLSEP). A helical membrane pass occupies residues 230 to 252 (TITFGTAIAAFYMPVTIMTILYW). At 253–492 (RIYKETEKRT…LIKEKKAAQT (240 aa)) the chain is on the cytoplasmic side. The Basolateral sorting signal motif lies at 275 to 281 (AEAENFV). Residues 324-357 (AEQMDQDHSSSDSWNNNDAAASLENSASSDEEDI) are disordered. A compositionally biased stretch (low complexity) spans 334–345 (SDSWNNNDAAAS). Residue S385 is modified to Phosphoserine. The segment at 398–419 (SVGLERKPSKLQTQQSMDDGGS) is disordered. A compositionally biased stretch (polar residues) spans 407 to 419 (KLQTQQSMDDGGS). The chain crosses the membrane as a helical span at residues 493–513 (LSAILLAFIITWTPYNIMVLV). Residues 514–527 (NTFCDSCIPKTYWN) are Extracellular-facing. The helical transmembrane segment at 528–547 (LGYWLCYINSTVNPVCYALC) threads the bilayer. At 548–590 (NKTFRNTFKMLLLCQCDKRKRRKQQYQQRQSVIFHKRVPEQAL) the chain is on the cytoplasmic side.

Belongs to the G-protein coupled receptor 1 family. Muscarinic acetylcholine receptor subfamily. CHRM3 sub-subfamily. In terms of assembly, homodimer; the dimers can form tetramers. Interacts with NALCN. Interacts with TMEM147.

The protein localises to the cell membrane. Its subcellular location is the postsynaptic cell membrane. It is found in the basolateral cell membrane. It localises to the endoplasmic reticulum membrane. Functionally, the muscarinic acetylcholine receptor mediates various cellular responses, including inhibition of adenylate cyclase, breakdown of phosphoinositides and modulation of potassium channels through the action of G proteins. Primary transducing effect is Pi turnover. In Bos taurus (Bovine), this protein is Muscarinic acetylcholine receptor M3 (CHRM3).